Consider the following 923-residue polypeptide: SPX and EXS domain-containing protein 1 (923 aa).

Residues 1 to 326 enclose the SPX domain; it reads MKFGKKLRFE…PMNSSIKLDQ (326 aa). 2 stretches are compositionally biased toward low complexity: residues 94–147 and 186–195; these read QEQS…QQQQ and TTTTTTTTTT. Disordered regions lie at residues 94-150 and 185-208; these read QEQS…QDLK and PTTTTTTTTTTMNTSAGSGIFKNK. A run of 9 helical transmembrane segments spans residues 382-402, 416-436, 471-491, 499-519, 529-551, 591-611, 620-640, 655-675, and 700-720; these read LKLGFAIGLSIGILAFVIILF, FVSTIPIFRAVGIPILAVWLW, ASFLTAIWLTMFLLFCGTVTG, PAQVYPLVLVIFFLSVVFFPF, LLFITLGNVIITPFGSTKFRALF, SIALPILSGLPLLWRFMQCIL, IHLGNSTKYAVGFSVVLFSAL, ILWCVCFVLSTLYMYCWDVVV, and WSYYYVLFSNLILRFAWTLTI. An EXS domain is found at 585 to 785; it reads RCNQVNSIAL…KNEVPKVESP (201 aa). Residues 793-871 form a disordered region; it reads SSYPYRQDNF…NNSPSGSNSS (79 aa).

It belongs to the SYG1 (TC 2.A.94) family.

Its subcellular location is the membrane. The polypeptide is SPX and EXS domain-containing protein 1 (Dictyostelium discoideum (Social amoeba)).